We begin with the raw amino-acid sequence, 85 residues long: UPF0386 protein Arad_1912 (85 aa).

Belongs to the UPF0386 family.

The chain is UPF0386 protein Arad_1912 from Rhizobium rhizogenes (strain K84 / ATCC BAA-868) (Agrobacterium radiobacter).